A 931-amino-acid chain; its full sequence is Chitin synthase 7 (931 aa).

Disordered stretches follow at residues 1–34 (MVRH…GHYR) and 56–92 (GDVG…ASSS). Polar residues-rich tracts occupy residues 7 to 28 (FTNS…TPYP) and 83 to 92 (PLTTGPASSS). Asn-536 is a glycosylation site (N-linked (GlcNAc...) asparagine). 3 consecutive transmembrane segments (helical) span residues 573 to 593 (IFSL…FSII), 615 to 635 (INLV…VLAL), and 647 to 667 (ILTL…SIIL). Asn-691 carries an N-linked (GlcNAc...) asparagine glycan. 2 helical membrane-spanning segments follow: residues 695–715 (GVLV…SFLY) and 725–745 (FPQY…YAFC). Positions 763–789 (LPAISSSKQKDGETAVVEEQQRSQGEL) are disordered. N-linked (GlcNAc...) asparagine glycosylation occurs at Asn-819. A helical transmembrane segment spans residues 826-846 (LVVVWLLTNAALAISIQTLNG). Asn-866 and Asn-874 each carry an N-linked (GlcNAc...) asparagine glycan. The chain crosses the membrane as a helical span at residues 899–919 (AILWTTFALSMVRFIGCVFYW).

It belongs to the chitin synthase family. Class III subfamily.

Its subcellular location is the cell membrane. It carries out the reaction [(1-&gt;4)-N-acetyl-beta-D-glucosaminyl](n) + UDP-N-acetyl-alpha-D-glucosamine = [(1-&gt;4)-N-acetyl-beta-D-glucosaminyl](n+1) + UDP + H(+). Polymerizes chitin, a structural polymer of the cell wall and septum, by transferring the sugar moiety of UDP-GlcNAc to the non-reducing end of the growing chitin polymer. The polypeptide is Chitin synthase 7 (Cryptococcus neoformans var. grubii serotype A (strain H99 / ATCC 208821 / CBS 10515 / FGSC 9487) (Filobasidiella neoformans var. grubii)).